A 184-amino-acid polypeptide reads, in one-letter code: NADH-quinone oxidoreductase subunit B (184 aa).

C63, C64, C128, and C158 together coordinate [4Fe-4S] cluster.

The protein belongs to the complex I 20 kDa subunit family. NDH-1 is composed of 14 different subunits. Subunits NuoB, C, D, E, F, and G constitute the peripheral sector of the complex. It depends on [4Fe-4S] cluster as a cofactor.

It localises to the cell inner membrane. It catalyses the reaction a quinone + NADH + 5 H(+)(in) = a quinol + NAD(+) + 4 H(+)(out). Its function is as follows. NDH-1 shuttles electrons from NADH, via FMN and iron-sulfur (Fe-S) centers, to quinones in the respiratory chain. The immediate electron acceptor for the enzyme in this species is believed to be ubiquinone. Couples the redox reaction to proton translocation (for every two electrons transferred, four hydrogen ions are translocated across the cytoplasmic membrane), and thus conserves the redox energy in a proton gradient. The protein is NADH-quinone oxidoreductase subunit B of Xanthomonas axonopodis pv. citri (strain 306).